Here is a 156-residue protein sequence, read N- to C-terminus: Transcriptional repressor NrdR (156 aa).

The segment at 3–34 (CPFCHSDNDKVQDSRTAEAGYVVRRKRLCQTC) is a zinc-finger region. Positions 49–139 (VRVVKSDETR…VYRDFDDAKD (91 aa)) constitute an ATP-cone domain.

This sequence belongs to the NrdR family. The cofactor is Zn(2+).

In terms of biological role, negatively regulates transcription of bacterial ribonucleotide reductase nrd genes and operons by binding to NrdR-boxes. This is Transcriptional repressor NrdR from Rhodopirellula baltica (strain DSM 10527 / NCIMB 13988 / SH1).